Here is an 892-residue protein sequence, read N- to C-terminus: MTDVTLKALAAERQVSVDRLVQQFADAGIRKSADDSVSAQEKQTLLAHLNREAVSGPDKLTLQRKTRSTLNIPGTGGKSKSVQIEVRKKRTFVKRDPQEAERLAAEEQAQREAEEQARREAEEQAKREAQQKAEREAAEQAKREAAEKAKREAAEKDKVSNQQTDDMTKTAQAEKARRENEAAELKRKAEEEARRKLEEEARRVAEEARRMAEENKWTATPEPVEDTSDYHVTTSQHARQAEDENDREVEGGRGRGRNAKAARPAKKGKHAESKADREEARAAVRCGKGGKRKGSSLQQGFQKPAQAVNRDVVIGETITVGELANKMAVKGSQVIKAMMKLGAMATINQVIDQETAQLVAEEMGHKVILRRENELEEAVMSDRDTGAAAEPRAPVVTIMGHVDHGKTSLLDYIRSTKVASGEAGGITQHIGAYHVETDNGMITFLDTPGHAAFTSMRARGAQATDIVVLVVAADDGVMPQTIEAIQHAKAAGVPVVVAVNKIDKPEADPDRVKNELSQYGILPEEWGGESQFVHVSAKAGTGIDELLDAILLQAEVLELKAVRKGMASGAVIESFLDKGRGPVATVLVREGTLHKGDIVLCGFEYGRVRAMRNELGQEVLEAGPSIPVEILGLSGVPAAGDEVTVVRDEKKAREVALYRQGKFREVKLARQQKSKLENMFANMTEGEVHEVNIVLKADVQGSVEAISDSLLKLSTDEVKVKIIGSGVGGITETDATLAAASNAILVGFNVRADASARKVIESESLDLRYYSVIYNLIDEVKAAMSGMLSPELKQQIIGLAEVRDVFKSPKFGAIAGCMVTEGTIKRHNPIRVLRDNVVIYEGELESLRRFKDDVNEVRNGMECGIGVKNYNDVRVGDMIEVFEIIEIQRTIA.

Positions 88 to 304 (KKRTFVKRDP…SSLQQGFQKP (217 aa)) are disordered. 2 stretches are compositionally biased toward basic and acidic residues: residues 93–159 (VKRD…KDKV) and 166–216 (DMTK…EENK). Basic residues predominate over residues 254–269 (GRGRNAKAARPAKKGK). The segment covering 270–282 (HAESKADREEARA) has biased composition (basic and acidic residues). A tr-type G domain is found at 391–560 (PRAPVVTIMG…LLQAEVLELK (170 aa)). Residues 400-407 (GHVDHGKT) are G1. Residue 400–407 (GHVDHGKT) coordinates GTP. Residues 425–429 (GITQH) form a G2 region. The segment at 446 to 449 (DTPG) is G3. GTP-binding positions include 446-450 (DTPGH) and 500-503 (NKID). Residues 500 to 503 (NKID) are G4. Positions 536–538 (SAK) are G5.

Belongs to the TRAFAC class translation factor GTPase superfamily. Classic translation factor GTPase family. IF-2 subfamily.

It localises to the cytoplasm. In terms of biological role, one of the essential components for the initiation of protein synthesis. Protects formylmethionyl-tRNA from spontaneous hydrolysis and promotes its binding to the 30S ribosomal subunits. Also involved in the hydrolysis of GTP during the formation of the 70S ribosomal complex. The protein is Translation initiation factor IF-2 of Salmonella choleraesuis (strain SC-B67).